The chain runs to 118 residues: Large ribosomal subunit protein bL19 (118 aa).

Belongs to the bacterial ribosomal protein bL19 family.

Functionally, this protein is located at the 30S-50S ribosomal subunit interface and may play a role in the structure and function of the aminoacyl-tRNA binding site. This is Large ribosomal subunit protein bL19 from Helicobacter pylori (strain G27).